The sequence spans 391 residues: Phosphopentomutase (391 aa).

Positions 12, 285, 290, 326, 327, and 338 each coordinate Mn(2+).

The protein belongs to the phosphopentomutase family. It depends on Mn(2+) as a cofactor.

It localises to the cytoplasm. The catalysed reaction is 2-deoxy-alpha-D-ribose 1-phosphate = 2-deoxy-D-ribose 5-phosphate. The enzyme catalyses alpha-D-ribose 1-phosphate = D-ribose 5-phosphate. The protein operates within carbohydrate degradation; 2-deoxy-D-ribose 1-phosphate degradation; D-glyceraldehyde 3-phosphate and acetaldehyde from 2-deoxy-alpha-D-ribose 1-phosphate: step 1/2. Functionally, isomerase that catalyzes the conversion of deoxy-ribose 1-phosphate (dRib-1-P) and ribose 1-phosphate (Rib-1-P) to deoxy-ribose 5-phosphate (dRib-5-P) and ribose 5-phosphate (Rib-5-P), respectively. The protein is Phosphopentomutase of Herpetosiphon aurantiacus (strain ATCC 23779 / DSM 785 / 114-95).